The primary structure comprises 256 residues: ATP synthase peripheral stalk subunit b, mitochondrial (256 aa).

The transit peptide at 1–42 (MLSRVVLSAAATAAPCLKNAAALGPGVLQATRAFHTGQPRLA) directs the protein to the mitochondrion. Lysine 131 carries the N6-succinyllysine modification. 7 positions are modified to N6-acetyllysine: lysine 139, lysine 154, lysine 162, lysine 221, lysine 225, lysine 233, and lysine 244.

This sequence belongs to the eukaryotic ATPase B chain family. As to quaternary structure, component of the ATP synthase complex composed at least of ATP5F1A/subunit alpha, ATP5F1B/subunit beta, ATP5MC1/subunit c (homooctomer), MT-ATP6/subunit a, MT-ATP8/subunit 8, ATP5ME/subunit e, ATP5MF/subunit f, ATP5MG/subunit g, ATP5MK/subunit k, ATP5MJ/subunit j, ATP5F1C/subunit gamma, ATP5F1D/subunit delta, ATP5F1E/subunit epsilon, ATP5PF/subunit F6, ATP5PB/subunit b, ATP5PD/subunit d, ATP5PO/subunit OSCP. ATP synthase complex consists of a soluble F(1) head domain (subunits alpha(3) and beta(3)) - the catalytic core - and a membrane F(0) domain - the membrane proton channel (subunits c, a, 8, e, f, g, k and j). These two domains are linked by a central stalk (subunits gamma, delta, and epsilon) rotating inside the F1 region and a stationary peripheral stalk (subunits F6, b, d, and OSCP).

Its subcellular location is the mitochondrion. The protein resides in the mitochondrion inner membrane. Functionally, subunit b, of the mitochondrial membrane ATP synthase complex (F(1)F(0) ATP synthase or Complex V) that produces ATP from ADP in the presence of a proton gradient across the membrane which is generated by electron transport complexes of the respiratory chain. ATP synthase complex consist of a soluble F(1) head domain - the catalytic core - and a membrane F(1) domain - the membrane proton channel. These two domains are linked by a central stalk rotating inside the F(1) region and a stationary peripheral stalk. During catalysis, ATP synthesis in the catalytic domain of F(1) is coupled via a rotary mechanism of the central stalk subunits to proton translocation. In vivo, can only synthesize ATP although its ATP hydrolase activity can be activated artificially in vitro. Part of the complex F(0) domain. Part of the complex F(0) domain and the peripheric stalk, which acts as a stator to hold the catalytic alpha(3)beta(3) subcomplex and subunit a/ATP6 static relative to the rotary elements. The sequence is that of ATP synthase peripheral stalk subunit b, mitochondrial from Mus musculus (Mouse).